We begin with the raw amino-acid sequence, 366 residues long: Putative [LysW]-aminoadipate semialdehyde/glutamate semialdehyde transaminase (366 aa).

Pyridoxal 5'-phosphate is bound by residues 90–91 and phenylalanine 117; that span reads GT. Arginine 120 serves as a coordination point for substrate. 202–205 provides a ligand contact to pyridoxal 5'-phosphate; it reads DEVQ. Lysine 230 bears the N6-(pyridoxal phosphate)lysine mark. Serine 254 is a binding site for substrate. Threonine 255 is a pyridoxal 5'-phosphate binding site.

It belongs to the class-III pyridoxal-phosphate-dependent aminotransferase family. LysJ subfamily. Homodimer. Pyridoxal 5'-phosphate serves as cofactor.

Its subcellular location is the cytoplasm. It catalyses the reaction [amino-group carrier protein]-C-terminal-gamma-(L-lysyl)-L-glutamate + 2-oxoglutarate = [amino-group carrier protein]-C-terminal-N-(1-carboxy-5-oxopentan-1-yl)-L-glutamine + L-glutamate. The enzyme catalyses [amino-group carrier protein]-C-terminal-gamma-(L-ornithyl)-L-glutamate + 2-oxoglutarate = [amino-group carrier protein]-C-terminal-gamma-(L-glutamyl-5-semialdehyde)-L-glutamate + L-glutamate. It participates in amino-acid biosynthesis; L-lysine biosynthesis via AAA pathway; L-lysine from L-alpha-aminoadipate (Thermus route): step 4/5. Its pathway is amino-acid biosynthesis; L-arginine biosynthesis. Involved in both the arginine and lysine biosynthetic pathways. This chain is Putative [LysW]-aminoadipate semialdehyde/glutamate semialdehyde transaminase, found in Pyrococcus furiosus (strain ATCC 43587 / DSM 3638 / JCM 8422 / Vc1).